Consider the following 194-residue polypeptide: Nucleoside triphosphate pyrophosphatase (194 aa).

Catalysis depends on Asp71, which acts as the Proton acceptor.

The protein belongs to the Maf family. A divalent metal cation is required as a cofactor.

The protein resides in the cytoplasm. The catalysed reaction is a ribonucleoside 5'-triphosphate + H2O = a ribonucleoside 5'-phosphate + diphosphate + H(+). The enzyme catalyses a 2'-deoxyribonucleoside 5'-triphosphate + H2O = a 2'-deoxyribonucleoside 5'-phosphate + diphosphate + H(+). Nucleoside triphosphate pyrophosphatase. May have a dual role in cell division arrest and in preventing the incorporation of modified nucleotides into cellular nucleic acids. The polypeptide is Nucleoside triphosphate pyrophosphatase (Paramagnetospirillum magneticum (strain ATCC 700264 / AMB-1) (Magnetospirillum magneticum)).